The chain runs to 298 residues: Cyclin-dependent kinase 2 (298 aa).

N-acetylmethionine is present on methionine 1. In terms of domain architecture, Protein kinase spans 4-286 (FQKVEKIGEG…AKAALAHPFF (283 aa)). Residue lysine 6 is modified to N6-acetyllysine. Residue 10–18 (IGEGTYGVV) coordinates ATP. Threonine 14 bears the Phosphothreonine mark. Residue tyrosine 15 is modified to Phosphotyrosine; by WEE1. Tyrosine 19 is modified (phosphotyrosine). ATP is bound by residues lysine 33, 81–83 (EFL), and aspartate 86. Aspartate 127 acts as the Proton acceptor in catalysis. ATP-binding positions include 129 to 132 (KPQN) and aspartate 145. 2 residues coordinate Mg(2+): asparagine 132 and aspartate 145. A Phosphothreonine; by CAK and CCRK modification is found at threonine 160.

It belongs to the protein kinase superfamily. CMGC Ser/Thr protein kinase family. CDC2/CDKX subfamily. In terms of assembly, found in a complex with CABLES1, CCNA1 and CCNE1. Interacts with CABLES1. Interacts with UHRF2. Part of a complex consisting of UHRF2, CDK2 and CCNE1. Interacts with the Speedy/Ringo proteins SPDYA and SPDYC. Interaction with SPDYA promotes kinase activation via a conformation change that alleviates obstruction of the substrate-binding cleft by the T-loop. Found in a complex with both SPDYA and CDKN1B/KIP1. Binds to RB1 and CDK7. Binding to CDKN1A (p21) leads to CDK2/cyclin E inactivation at the G1-S phase DNA damage checkpoint, thereby arresting cells at the G1-S transition during DNA repair. Associated with PTPN6 and beta-catenin/CTNNB1. Interacts with CACUL1. May interact with CEP63. Interacts with ANKRD17. Interacts with CEBPA (when phosphorylated). Forms a ternary complex with CCNA2 and CDKN1B; CDKN1B inhibits the kinase activity of CDK2 through conformational rearrangements. Interacts with cyclins A, B1, B3, D, or E. Interacts with CDK2AP2. Mg(2+) is required as a cofactor. Post-translationally, phosphorylated at Thr-160 by CDK7 in a CAK complex. Phosphorylation at Thr-160 promotes kinase activity, whereas phosphorylation at Tyr-15 by WEE1 reduces slightly kinase activity. Phosphorylated on Thr-14 and Tyr-15 during S and G2 phases before being dephosphorylated by CDC25A. Nitrosylated after treatment with nitric oxide (DETA-NO).

It is found in the cytoplasm. The protein resides in the cytoskeleton. Its subcellular location is the microtubule organizing center. The protein localises to the centrosome. It localises to the nucleus. It is found in the cajal body. The protein resides in the endosome. The catalysed reaction is L-seryl-[protein] + ATP = O-phospho-L-seryl-[protein] + ADP + H(+). It carries out the reaction L-threonyl-[protein] + ATP = O-phospho-L-threonyl-[protein] + ADP + H(+). Its activity is regulated as follows. Phosphorylation at Thr-14 or Tyr-15 inactivates the enzyme, while phosphorylation at Thr-160 activates it. Stimulated by MYC. Inactivated by CDKN1A (p21). Functionally, serine/threonine-protein kinase involved in the control of the cell cycle; essential for meiosis, but dispensable for mitosis. Phosphorylates CABLES1, CTNNB1, CDK2AP2, ERCC6, NBN, USP37, p53/TP53, NPM1, CDK7, RB1, BRCA2, MYC, NPAT, EZH2. Triggers duplication of centrosomes and DNA. Acts at the G1-S transition to promote the E2F transcriptional program and the initiation of DNA synthesis, and modulates G2 progression; controls the timing of entry into mitosis/meiosis by controlling the subsequent activation of cyclin B/CDK1 by phosphorylation, and coordinates the activation of cyclin B/CDK1 at the centrosome and in the nucleus. Crucial role in orchestrating a fine balance between cellular proliferation, cell death, and DNA repair in embryonic stem cells (ESCs). Activity of CDK2 is maximal during S phase and G2; activated by interaction with cyclin E during the early stages of DNA synthesis to permit G1-S transition, and subsequently activated by cyclin A2 (cyclin A1 in germ cells) during the late stages of DNA replication to drive the transition from S phase to mitosis, the G2 phase. EZH2 phosphorylation promotes H3K27me3 maintenance and epigenetic gene silencing. Cyclin E/CDK2 prevents oxidative stress-mediated Ras-induced senescence by phosphorylating MYC. Involved in G1-S phase DNA damage checkpoint that prevents cells with damaged DNA from initiating mitosis; regulates homologous recombination-dependent repair by phosphorylating BRCA2, this phosphorylation is low in S phase when recombination is active, but increases as cells progress towards mitosis. In response to DNA damage, double-strand break repair by homologous recombination a reduction of CDK2-mediated BRCA2 phosphorylation. Involved in regulation of telomere repair by mediating phosphorylation of NBN. Phosphorylation of RB1 disturbs its interaction with E2F1. NPM1 phosphorylation by cyclin E/CDK2 promotes its dissociation from unduplicated centrosomes, thus initiating centrosome duplication. Cyclin E/CDK2-mediated phosphorylation of NPAT at G1-S transition and until prophase stimulates the NPAT-mediated activation of histone gene transcription during S phase. Required for vitamin D-mediated growth inhibition by being itself inactivated. Involved in the nitric oxide- (NO) mediated signaling in a nitrosylation/activation-dependent manner. USP37 is activated by phosphorylation and thus triggers G1-S transition. CTNNB1 phosphorylation regulates insulin internalization. Phosphorylates FOXP3 and negatively regulates its transcriptional activity and protein stability. Phosphorylates ERCC6 which is essential for its chromatin remodeling activity at DNA double-strand breaks. Acts as a regulator of the phosphatidylinositol 3-kinase/protein kinase B signal transduction by mediating phosphorylation of the C-terminus of protein kinase B (PKB/AKT1 and PKB/AKT2), promoting its activation. The polypeptide is Cyclin-dependent kinase 2 (CDK2) (Bos taurus (Bovine)).